The following is a 437-amino-acid chain: Transcription factor AP-2-alpha (437 aa).

K10 is covalently cross-linked (Glycyl lysine isopeptide (Lys-Gly) (interchain with G-Cter in SUMO); alternate). Residue K10 forms a Glycyl lysine isopeptide (Lys-Gly) (interchain with G-Cter in SUMO2); alternate linkage. The interval 14 to 107 (CEDRHDGASN…GQRQSQESGL (94 aa)) is disordered. Residues 57-62 (YFPPPY) carry the PPxY motif motif. 2 stretches are compositionally biased toward low complexity: residues 65–74 (IYPQSQDPYS) and 88–101 (QPQP…GQRQ). Glycyl lysine isopeptide (Lys-Gly) (interchain with G-Cter in SUMO2) cross-links involve residues K177 and K184. Phosphoserine; by PKA is present on S239. Positions 280 to 410 (RRKAANVTLL…YLTEALKAMD (131 aa)) are H-S-H (helix-span-helix), dimerization. Polar residues predominate over residues 414 to 427 (LSNNPNSHTDNNAK). The segment at 414 to 437 (LSNNPNSHTDNNAKSSDKEEKHRK) is disordered. Residues 428–437 (SSDKEEKHRK) are compositionally biased toward basic and acidic residues.

This sequence belongs to the AP-2 family. Binds DNA as a dimer. Can form homodimers or heterodimers with other AP-2 family members. Interacts with WWOX. Interacts with CITED4. Interacts with UBE2I. Interacts with RALBP1 in a complex also containing EPN1 and NUMB during interphase and mitosis. Interacts with KCTD1; this interaction represses transcription activation. Interacts (via C-terminus) with CITED2 (via C-terminus); the interaction stimulates TFAP2A-transcriptional activation. Interacts (via N-terminus) with EP300 (via N-terminus); the interaction requires CITED2. Interacts with KCTD15; this interaction inhibits TFAP2A transcriptional activation. In terms of processing, sumoylated on Lys-10; which inhibits transcriptional activity.

It localises to the nucleus. Functionally, sequence-specific DNA-binding protein that interacts with inducible viral and cellular enhancer elements to regulate transcription of selected genes. AP-2 factors bind to the consensus sequence 5'-GCCNNNGGC-3' and activate genes involved in a large spectrum of important biological functions including proper eye, face, body wall, limb and neural tube development. They also suppress a number of genes including MCAM/MUC18, C/EBP alpha and MYC. AP-2-alpha is the only AP-2 protein required for early morphogenesis of the lens vesicle. Together with the CITED2 coactivator, stimulates the PITX2 P1 promoter transcription activation. Associates with chromatin to the PITX2 P1 promoter region. This is Transcription factor AP-2-alpha (TFAP2A) from Bos taurus (Bovine).